The primary structure comprises 281 residues: MIENRRGLTIFSHTMLILGIAVILFPLYVAFVAATLDDRAVFETPMTLLPGTQLLENIKTIWVNGVGVNSAPFWLMMLNSFIMAFSITVGKITVSMLSAFAIVWFRFPLRNLFFWMIFITLMLPVEVRIFPTVEVIANLKMLNSYAGLTLPLMASATATFLFRQFFMTLPDELVEAARIDGASPMRFFRDIVLPLSKTNLAALFVITFIYGWNQYLWPLLIITDVNLGTAVAGIKGMIATGEGTTQWNQVMAAMLLTLIPPVVIVLAMQRAFVRGLVDSEK.

6 helical membrane-spanning segments follow: residues Leu-16 to Leu-36, Phe-85 to Phe-105, Phe-113 to Val-133, Leu-142 to Phe-162, Ala-202 to Ile-222, and Trp-247 to Ala-267. Residues Met-77–Met-268 enclose the ABC transmembrane type-1 domain.

Belongs to the binding-protein-dependent transport system permease family. UgpAE subfamily. The complex is composed of two ATP-binding proteins (UgpC), two transmembrane proteins (UgpA and UgpE) and a solute-binding protein (UgpB).

The protein localises to the cell inner membrane. In terms of biological role, part of the ABC transporter complex UgpBAEC involved in sn-glycerol-3-phosphate (G3P) import. Probably responsible for the translocation of the substrate across the membrane. In Salmonella typhi, this protein is sn-glycerol-3-phosphate transport system permease protein UgpE (ugpE).